A 118-amino-acid chain; its full sequence is Basic phospholipase A2 PA-12A (118 aa).

7 cysteine pairs are disulfide-bonded: cysteine 11-cysteine 71, cysteine 27-cysteine 117, cysteine 29-cysteine 45, cysteine 44-cysteine 98, cysteine 51-cysteine 91, cysteine 60-cysteine 84, and cysteine 78-cysteine 89. Residues tyrosine 28, glycine 30, and glycine 32 each coordinate Ca(2+). Histidine 48 is a catalytic residue. Aspartate 49 lines the Ca(2+) pocket. Aspartate 92 is a catalytic residue.

It belongs to the phospholipase A2 family. Group I subfamily. D49 sub-subfamily. Requires Ca(2+) as cofactor. Expressed by the venom gland.

The protein localises to the secreted. The catalysed reaction is a 1,2-diacyl-sn-glycero-3-phosphocholine + H2O = a 1-acyl-sn-glycero-3-phosphocholine + a fatty acid + H(+). In terms of biological role, PLA2 catalyzes the calcium-dependent hydrolysis of the 2-acyl groups in 3-sn-phosphoglycerides. This is Basic phospholipase A2 PA-12A from Pseudechis australis (Mulga snake).